We begin with the raw amino-acid sequence, 449 residues long: Probable hexaprenyl pyrophosphate synthase, mitochondrial (449 aa).

Isopentenyl diphosphate-binding residues include Lys-122, Arg-125, and His-200. Residues Asp-207 and Asp-211 each contribute to the Mg(2+) site. Residue Arg-216 coordinates an all-trans-polyprenyl diphosphate. Isopentenyl diphosphate is bound at residue Arg-217. Residues Lys-300, Thr-301, Gln-338, and Lys-355 each contribute to the an all-trans-polyprenyl diphosphate site.

Belongs to the FPP/GGPP synthase family. Mg(2+) is required as a cofactor.

Its subcellular location is the mitochondrion. It participates in cofactor biosynthesis; ubiquinone biosynthesis. In terms of biological role, assembly of polyisoprenoid side chains. The polyprenyl synthase of coenzyme Q biosynthesis catalyzes the formation from isopentenyl diphosphate of all trans-polyprenyl pyrophosphates generally ranging in length of between 6 and 10 isoprene units depending on the species. The sequence is that of Probable hexaprenyl pyrophosphate synthase, mitochondrial from Neurospora crassa (strain ATCC 24698 / 74-OR23-1A / CBS 708.71 / DSM 1257 / FGSC 987).